A 314-amino-acid polypeptide reads, in one-letter code: NF-kappa-B inhibitor alpha (314 aa).

Residues 1–41 (MFQPAEPGQEWAMEGPRDALKKERLLDDRHDSGLDSMKDEE) are disordered. The span at 15-41 (GPRDALKKERLLDDRHDSGLDSMKDEE) shows a compositional bias: basic and acidic residues. A Glycyl lysine isopeptide (Lys-Gly) (interchain with G-Cter in SUMO); alternate cross-link involves residue Lys21. Residue Lys21 forms a Glycyl lysine isopeptide (Lys-Gly) (interchain with G-Cter in ubiquitin); alternate linkage. Residue Lys22 forms a Glycyl lysine isopeptide (Lys-Gly) (interchain with G-Cter in ubiquitin) linkage. The short motif at 30–36 (HDSGLDS) is the Destruction motif element. The residue at position 32 (Ser32) is a Phosphoserine; by IKKA and IKKB. Ser36 carries the post-translational modification Phosphoserine; by IKKA, IKKB, IKKE and TBK1. A Phosphotyrosine; by Tyr-kinases modification is found at Tyr42. Positions 45–54 (MVKELREIRL) match the Nuclear export signal motif. Residues 110 to 120 (LQQTPLHLAVI) carry the Nuclear import signal motif. ANK repeat units follow at residues 110-139 (LQQT…DPEL), 143-172 (RGNT…TQHL), 182-211 (NGHT…DVNA), and 216-245 (NGRT…DVNR). 2 positions are modified to (3S)-3-hydroxyasparagine; by HIF1AN: Asn210 and Asn244. Phosphoserine; by CK2 occurs at positions 283 and 288. Thr291 carries the phosphothreonine; by CK2 modification. Residue Ser293 is modified to Phosphoserine; by CK2. Thr296 is modified (phosphothreonine).

Belongs to the NF-kappa-B inhibitor family. As to quaternary structure, interacts with RELA; the interaction requires the nuclear import signal. Part of a 70-90 kDa complex at least consisting of CHUK, IKBKB, NFKBIA, RELA, ELP1 and MAP3K14. Interacts with NKIRAS1 and NKIRAS2. Interacts with RWDD3; the interaction enhances sumoylation. Interacts with PRMT2. Interacts with PRKACA in platelets; this interaction is disrupted by thrombin and collagen. Interacts with MEFV. Interacts with DDRGK1; positively regulates NFKBIA phosphorylation and degradation. Interacts with HNRNPA2B1; the interaction may be mediated by the RRM2 domain of HNRNPA2B1, and HNRNPA2B1 may interact simultaneously with FAM76B and either NFKBIA or NFKBIE to form a complex. Post-translationally, phosphorylated at Ser-32 and Ser-36 by IKKA/CHUK and IKKB/IKBKB; disables inhibition of NF-kappa-B DNA-binding activity. Phosphorylation at positions 32 and 36 is prerequisite to recognition by the SCF(FBXW11) and SCF(BTRC) complexes, leading to polyubiquitination and subsequent degradation. Polyubiquitinated at Lys-21 and/or Lys-22 following phosphorylation at Ser-32 and Ser-36. Monoubiquitinated at Lys-21 and/or Lys-22 by UBE2D3. Ubiquitin chain elongation is then performed by CDC34 in cooperation with the SCF(FBXW11) E3 ligase complex, building ubiquitin chains from the UBE2D3-primed NFKBIA-linked ubiquitin. The resulting polyubiquitination leads to protein degradation. Also ubiquitinated by the SCF(BTRC) complex following stimulus-dependent phosphorylation at Ser-32 and Ser-36. Deubiquitinated by USP38, leading to NF-kappa-B inhibition. In terms of processing, sumoylated; sumoylation requires the presence of the nuclear import signal. Sumoylation blocks ubiquitination and proteasome-mediated degradation of the protein thereby increasing the protein stability. Post-translationally, hydroxylated by HIF1AN.

The protein localises to the cytoplasm. Its subcellular location is the nucleus. In terms of biological role, inhibits the activity of dimeric NF-kappa-B/REL complexes by trapping REL (RELA/p65 and NFKB1/p50) dimers in the cytoplasm by masking their nuclear localization signals. On cellular stimulation by immune and pro-inflammatory responses, becomes phosphorylated promoting ubiquitination and degradation, enabling the dimeric RELA to translocate to the nucleus and activate transcription. This Sus scrofa (Pig) protein is NF-kappa-B inhibitor alpha (NFKBIA).